The chain runs to 610 residues: METNVNPLAVILVYFDSKGDRLLYRYPYQTLGQTEVANDEQRKSRKRNPYAVANTDDLLQTPTHLGAAKSQGQLQGFADEVLSALFAVKPQLCNQKFELKLNDVRFVSHPTLIPQKEQRSGPMAKQQMLINIVFALHAQASYSIVKCYHELSKRLGLALKFEEQRSGYLTEQTAQMARTHDEQQQQPLERTLELIAERCSLAQALRSIFHDLCTTGLLSTSLNHNLTLCFCLPAKAHQLHKKGSMVDPETIDRCLRALKPYHGMLLLVDFAELLDCVPPTGARMLWQLVDVYDPLISLQSMSSNADLSIEHVYKLVSHLVYWAKATIIYPLCETNVYVIAPDAPLHTKSHLVEKFSARFAGMSLFEVISDFSLPTSIGHLTTPLQQPARQGILAQMVIWMLQHHLLMQLHTYVQFMPSEDEFGDSASCSNHLRDAISDEEGDQEPDADELHGSMLSMSSHPLPVPAVLVGGHRREASEDHSSLASDNIAVQPSSSHKSNFSITASMSTDNCDSLDSMEDEQKLKELLQVFSDADRAAIRRIPASANVDDLSLLVKLYQMGYFKSEHHLEEIMYFENLRRSQLLQLLDKFRDVLIIYETEDPAIASMYNTK.

At S437 the chain carries Phosphoserine. The tract at residues 474–501 (REASEDHSSLASDNIAVQPSSSHKSNFS) is disordered. Residues 482–501 (SLASDNIAVQPSSSHKSNFS) are compositionally biased toward polar residues.

This sequence belongs to the NPR3 family. In terms of assembly, component of the GATOR complex consisting of mio, Nup44A/Seh1, Im11, Nplr3, Nplr2, Wdr24, Wdr59 and Sec13. Within the GATOR complex, probable component of the GATOR1 subcomplex which is likely composed of Iml1, Nplr2 and Nplr3. Interacts with Nprl2.

It is found in the cytoplasm. It localises to the lysosome. An essential component of the GATOR subcomplex GATOR1 which functions as an inhibitor of the amino acid-sensing branch of the TORC1 signaling pathway. The two GATOR subcomplexes, GATOR1 and GATOR2, regulate the TORC1 pathway in order to mediate metabolic homeostasis, female gametogenesis and the response to amino acid limitation and complete starvation. The function of GATOR1 in negatively regulating the TORC1 pathway is essential for maintaining baseline levels of TORC1 activity under nutrient rich conditions, and for promoting survival during amino acid or complete starvation by inhibiting TORC1-dependent cell growth and promoting catabolic metabolism and autophagy. In addition, this inhibition of TORC1 is necessary to maintain female fertility under normal conditions and during periods of nutrient stress. GATOR1 and GATOR2 act at different stages of oogenesis to regulate TORC1 in order to control meiotic entry and promote oocyte growth and development. After exactly four mitotic cyst divisions, the GATOR1 complex members (Iml1, Nprl2 and Nprl3) down-regulate TORC1 to slow cellular metabolism and promote the mitotic/meiotic transition. At later stages of oogenesis, the mio and Nup44A components of the GATOR2 complex inhibit GATOR1 and thus activate TORC1 to promote meiotic progression, and drive oocyte growth and development. In Drosophila melanogaster (Fruit fly), this protein is GATOR complex protein NPRL3.